We begin with the raw amino-acid sequence, 350 residues long: tRNA uridine(34) hydroxylase (350 aa).

Residues 146–240 (DDPDAVFIDM…YARRAREQGL (95 aa)) enclose the Rhodanese domain. Cys-200 functions as the Cysteine persulfide intermediate in the catalytic mechanism. Residues 319–328 (RRRRAGRENG) show a composition bias toward basic and acidic residues. The disordered stretch occupies residues 319–350 (RRRRAGRENGNKIFNKSRGRLNSKLSIPDPAE).

This sequence belongs to the TrhO family.

The catalysed reaction is uridine(34) in tRNA + AH2 + O2 = 5-hydroxyuridine(34) in tRNA + A + H2O. Catalyzes oxygen-dependent 5-hydroxyuridine (ho5U) modification at position 34 in tRNAs. The sequence is that of tRNA uridine(34) hydroxylase from Salmonella gallinarum (strain 287/91 / NCTC 13346).